A 251-amino-acid polypeptide reads, in one-letter code: tRNA (guanine-N(7)-)-methyltransferase (251 aa).

S-adenosyl-L-methionine-binding positions include G72, 95-96, 132-133, and L152; these read EI and NA. The active site involves D155. 230–232 is a binding site for S-adenosyl-L-methionine; it reads SEE.

Belongs to the class I-like SAM-binding methyltransferase superfamily. TrmB family.

It localises to the nucleus. It carries out the reaction guanosine(46) in tRNA + S-adenosyl-L-methionine = N(7)-methylguanosine(46) in tRNA + S-adenosyl-L-homocysteine. Its pathway is tRNA modification; N(7)-methylguanine-tRNA biosynthesis. Catalyzes the formation of N(7)-methylguanine at position 46 (m7G46) in tRNA. The chain is tRNA (guanine-N(7)-)-methyltransferase from Drosophila willistoni (Fruit fly).